The following is a 147-amino-acid chain: Ubiquitin-conjugating enzyme E2 D4 (147 aa).

The UBC core domain maps to 1–147 (MALKRIQKEL…AREWTQKYAM (147 aa)). Cysteine 85 (glycyl thioester intermediate) is an active-site residue.

It belongs to the ubiquitin-conjugating enzyme family.

It carries out the reaction S-ubiquitinyl-[E1 ubiquitin-activating enzyme]-L-cysteine + [E2 ubiquitin-conjugating enzyme]-L-cysteine = [E1 ubiquitin-activating enzyme]-L-cysteine + S-ubiquitinyl-[E2 ubiquitin-conjugating enzyme]-L-cysteine.. The protein operates within protein modification; protein ubiquitination. In terms of biological role, accepts ubiquitin from the E1 complex and catalyzes its covalent attachment to other proteins. In vitro able to promote polyubiquitination using all 7 ubiquitin Lys residues, but may prefer 'Lys-11' and 'Lys-48'-linked polyubiquitination. The sequence is that of Ubiquitin-conjugating enzyme E2 D4 (UBE2D4) from Homo sapiens (Human).